A 258-amino-acid polypeptide reads, in one-letter code: Tryptophan synthase alpha chain (258 aa).

Residues glutamate 47 and aspartate 58 each act as proton acceptor in the active site.

The protein belongs to the TrpA family. As to quaternary structure, tetramer of two alpha and two beta chains.

The enzyme catalyses (1S,2R)-1-C-(indol-3-yl)glycerol 3-phosphate + L-serine = D-glyceraldehyde 3-phosphate + L-tryptophan + H2O. It participates in amino-acid biosynthesis; L-tryptophan biosynthesis; L-tryptophan from chorismate: step 5/5. Its function is as follows. The alpha subunit is responsible for the aldol cleavage of indoleglycerol phosphate to indole and glyceraldehyde 3-phosphate. In Bacillus cereus (strain G9842), this protein is Tryptophan synthase alpha chain.